We begin with the raw amino-acid sequence, 359 residues long: UDP-N-acetylglucosamine--N-acetylmuramyl-(pentapeptide) pyrophosphoryl-undecaprenol N-acetylglucosamine transferase (359 aa).

UDP-N-acetyl-alpha-D-glucosamine is bound by residues 15-17, Asn-127, Arg-166, Ser-191, Ile-245, 264-269, and Gln-290; these read TGG and ALTVSE.

Belongs to the glycosyltransferase 28 family. MurG subfamily.

It localises to the cell inner membrane. It catalyses the reaction di-trans,octa-cis-undecaprenyl diphospho-N-acetyl-alpha-D-muramoyl-L-alanyl-D-glutamyl-meso-2,6-diaminopimeloyl-D-alanyl-D-alanine + UDP-N-acetyl-alpha-D-glucosamine = di-trans,octa-cis-undecaprenyl diphospho-[N-acetyl-alpha-D-glucosaminyl-(1-&gt;4)]-N-acetyl-alpha-D-muramoyl-L-alanyl-D-glutamyl-meso-2,6-diaminopimeloyl-D-alanyl-D-alanine + UDP + H(+). The protein operates within cell wall biogenesis; peptidoglycan biosynthesis. In terms of biological role, cell wall formation. Catalyzes the transfer of a GlcNAc subunit on undecaprenyl-pyrophosphoryl-MurNAc-pentapeptide (lipid intermediate I) to form undecaprenyl-pyrophosphoryl-MurNAc-(pentapeptide)GlcNAc (lipid intermediate II). The protein is UDP-N-acetylglucosamine--N-acetylmuramyl-(pentapeptide) pyrophosphoryl-undecaprenol N-acetylglucosamine transferase of Pseudomonas putida (strain W619).